Here is a 493-residue protein sequence, read N- to C-terminus: Transcript termination protein A18 (493 aa).

In terms of domain architecture, Helicase ATP-binding spans 100–256; sequence MIELKRPLYI…NSIINIAKLS (157 aa). 113–120 contributes to the ATP binding site; it reads LACGFGKT. The DESH box signature appears at 206-209; that stretch reads DESH.

It belongs to the helicase family. Poxviruses subfamily. In terms of assembly, interacts with G2. Might be part of a transcription complex composed at least of G2, A18, and H5.

It localises to the virion. Functionally, DNA helicase which seems to act as a postreplicative transcription termination factor. Involved in ATP-dependent release of nascent RNA. Forms a stable complex with single-stranded DNA, and to a lesser extent RNA. In Camelus, this protein is Transcript termination protein A18.